The primary structure comprises 140 residues: MRRTILKSKIHRITITGADLHYEGSLTLDEAIMEAANLVPFEKIEIYNVNNGHRFSTYVIPGQRYGGECILNGAAARLGHAGDIIIIVSWADLDEEELKNFKVNLVYMDEENNIKEHKVTTVFSEEVKEIAERNKNLVRD.

Ser-25 acts as the Schiff-base intermediate with substrate; via pyruvic acid in catalysis. Ser-25 bears the Pyruvic acid (Ser) mark. Position 57 (Thr-57) interacts with substrate. Tyr-58 serves as the catalytic Proton donor. 73-75 contributes to the substrate binding site; it reads GAA.

The protein belongs to the PanD family. Heterooctamer of four alpha and four beta subunits. The cofactor is pyruvate. Post-translationally, is synthesized initially as an inactive proenzyme, which is activated by self-cleavage at a specific serine bond to produce a beta-subunit with a hydroxyl group at its C-terminus and an alpha-subunit with a pyruvoyl group at its N-terminus.

The protein resides in the cytoplasm. It carries out the reaction L-aspartate + H(+) = beta-alanine + CO2. It participates in cofactor biosynthesis; (R)-pantothenate biosynthesis; beta-alanine from L-aspartate: step 1/1. In terms of biological role, catalyzes the pyruvoyl-dependent decarboxylation of aspartate to produce beta-alanine. This chain is Aspartate 1-decarboxylase, found in Persephonella marina (strain DSM 14350 / EX-H1).